We begin with the raw amino-acid sequence, 490 residues long: Cytochrome P450 2W1 (490 aa).

An N-terminal signal peptide occupies residues 1–22; the sequence is MALLLLLFLGLLGLWGLLCACA. Asn-177 carries an N-linked (GlcNAc...) asparagine glycan. Residue Cys-433 coordinates heme.

It belongs to the cytochrome P450 family. Heme serves as cofactor. As to expression, very low levels are detected in fetal and adult tissues. Highly expressed in several tumor samples, in particular colon and adrenal tumors.

Its subcellular location is the endoplasmic reticulum lumen. The protein localises to the cell membrane. It is found in the microsome membrane. It carries out the reaction all-trans-retinoate + reduced [NADPH--hemoprotein reductase] + O2 = all-trans-4-hydroxyretinoate + oxidized [NADPH--hemoprotein reductase] + H2O + H(+). The catalysed reaction is 1-(9Z-octadecenoyl)-sn-glycero-3-phosphocholine + reduced [NADPH--hemoprotein reductase] + O2 = 1-[8-hydroxy-(9Z)-octadecenoyl]-sn-glycero-3-phosphocholine + oxidized [NADPH--hemoprotein reductase] + H2O + H(+). It catalyses the reaction 1-(9Z-octadecenoyl)-sn-glycero-3-phosphocholine + reduced [NADPH--hemoprotein reductase] + O2 = 1-[11-hydroxy-(9Z)-octadecenoyl]-sn-glycero-3-phosphocholine + oxidized [NADPH--hemoprotein reductase] + H2O + H(+). The enzyme catalyses 1-(9Z-octadecenoyl)-sn-glycero-3-phosphocholine + reduced [NADPH--hemoprotein reductase] + O2 = 1-[(9S,10R)-epoxy-octadecanoyl]-sn-glycero-3-phosphocholine + oxidized [NADPH--hemoprotein reductase] + H2O + H(+). It carries out the reaction 1-(9Z-octadecenoyl)-sn-glycero-3-phosphocholine + reduced [NADPH--hemoprotein reductase] + O2 = 1-[(9R,10S)-epoxy-octadecanoyl]-sn-glycero-3-phosphocholine + oxidized [NADPH--hemoprotein reductase] + H2O + H(+). In terms of biological role, a cytochrome P450 monooxygenase that may play a role in retinoid and phospholipid metabolism. Catalyzes the hydroxylation of saturated carbon hydrogen bonds. Hydroxylates all trans-retinoic acid (atRA) to 4-hydroxyretinoate and may regulate atRA clearance. Other retinoids such as all-trans retinol and all-trans retinal are potential endogenous substrates. Catalyzes both epoxidation of double bonds and hydroxylation of carbon hydrogen bonds of the fatty acyl chain of 1-acylphospholipids/2-lysophospholipids. Can metabolize various lysophospholipids classes including lysophosphatidylcholines (LPCs), lysophosphatidylinositols (LPIs), lysophosphatidylserines (LPSs), lysophosphatidylglycerols (LPGs), lysophosphatidylethanolamines (LPEs) and lysophosphatidic acids (LPAs). Has low or no activity toward 2-acylphospholipids/1-lysophospholipids, diacylphospholipids and free fatty acids. May play a role in tumorigenesis by activating procarcinogens such as aflatoxin B1, polycyclic aromatic hydrocarbon dihydrodiols and aromatic amines. Mechanistically, uses molecular oxygen inserting one oxygen atom into a substrate, and reducing the second into a water molecule, with two electrons provided by NADPH via cytochrome P450 reductase (CPR; NADPH-ferrihemoprotein reductase). The protein is Cytochrome P450 2W1 of Homo sapiens (Human).